Consider the following 265-residue polypeptide: NAD kinase (265 aa).

Residue Asp45 is the Proton acceptor of the active site. NAD(+)-binding positions include Asp45–Gly46, Asn122–Glu123, Arg148, Asp150, Thr161–Ser166, and Ala185.

It belongs to the NAD kinase family. A divalent metal cation serves as cofactor.

It is found in the cytoplasm. The catalysed reaction is NAD(+) + ATP = ADP + NADP(+) + H(+). Functionally, involved in the regulation of the intracellular balance of NAD and NADP, and is a key enzyme in the biosynthesis of NADP. Catalyzes specifically the phosphorylation on 2'-hydroxyl of the adenosine moiety of NAD to yield NADP. In Lactobacillus delbrueckii subsp. bulgaricus (strain ATCC 11842 / DSM 20081 / BCRC 10696 / JCM 1002 / NBRC 13953 / NCIMB 11778 / NCTC 12712 / WDCM 00102 / Lb 14), this protein is NAD kinase.